Here is a 117-residue protein sequence, read N- to C-terminus: Putative small ubiquitin-related modifier 6 (117 aa).

A disordered region spans residues 1–30 (MSTKSSSIHGRNEVKMEGEKRKDVESESTH). The segment covering 10-28 (GRNEVKMEGEKRKDVESES) has biased composition (basic and acidic residues). A Ubiquitin-like domain is found at 31–108 (VTLNVKGQDE…IDALLPQESG (78 aa)). Residue G108 forms a Glycyl lysine isopeptide (Gly-Lys) (interchain with K-? in acceptor proteins) linkage.

It belongs to the ubiquitin family. SUMO subfamily. As to quaternary structure, interacts with SAE2, SCE1, SIZ1 and MMS21 Covalently attached to a number of proteins.

The protein resides in the nucleus. The protein localises to the cytoplasm. Its function is as follows. Ubiquitin-like protein which can be covalently attached to target lysines as a monomer. Does not seem to be involved in protein degradation and may function as an antagonist of ubiquitin in the degradation process. This chain is Putative small ubiquitin-related modifier 6 (SUMO6), found in Arabidopsis thaliana (Mouse-ear cress).